The chain runs to 104 residues: Large ribosomal subunit protein uL23 (104 aa).

It belongs to the universal ribosomal protein uL23 family. As to quaternary structure, part of the 50S ribosomal subunit. Contacts protein L29, and trigger factor when it is bound to the ribosome.

Its function is as follows. One of the early assembly proteins it binds 23S rRNA. One of the proteins that surrounds the polypeptide exit tunnel on the outside of the ribosome. Forms the main docking site for trigger factor binding to the ribosome. The chain is Large ribosomal subunit protein uL23 from Rhodospirillum rubrum (strain ATCC 11170 / ATH 1.1.1 / DSM 467 / LMG 4362 / NCIMB 8255 / S1).